We begin with the raw amino-acid sequence, 882 residues long: MSKNIDDIKNEDGKKVKIIKLKKKVVKIVTYNDLSVKNDSNSFVDLHNNSNKAEYSQSRDNRTGGYSQNRDNRAGGYSQNRDNRAGGYSQNRDNRTGGYSQNRDNRTGGYSQNRDNRTGGYSQNRDNRGGYSQGRDNRTGGYSQSRDNRTGGYSQNRDNRTGGYSQNRDNRTGGYSQNRDNRTGGYSQNRDSLSFQYQGSVKKTYVAKNNSQNKYTTTSMSFRRLIKTKVPAIVSSTPAADSENSKELNRKLGEKKKQQQESQKSYKRKKAETESKTIEQKVFEQLQKKKRENLANPIPKSIDIMGSITVSDLARKMNLKSSDLIAKLMALGVMVTINEKIDSDTATILVEEYGSKVNVVSIYDETVIEEEVEDQSKRVEKPPVITIMGHVDHGKTKLLSVLQNIDINQTESGGITQHIGAYTIVYNDREITFLDTPGHEAFTMMRSRGAQVTDIVVLVVSAIDGVMPQTIEAINHAKEANVPIIVAINKIDLPDSNPDKIKHQLSEYGLVSEDWGGDTIFVMISALKNIGISELLDMILLQSDMMLLKANPSKRAIGKVLDAKIDLGRGIVCSVIIEDGTLYVGDSFVGGACYGKVKALISEKGVSVKSVGPAKAISVLGFSSMPQAGDPFQVTKTEKEAKLISSKRQDLKKYESSKNVKKVTMLNLYDSIKEGALKELKIILKADVQGSVEALKNSLEKLTNDEVRVRVVHSSAGVITETDISFASASDAIVIGFHVRPTAKAQVLADQEKVEIRKYNVIYDAINDVRSVLEGMLEPDVEQQFIGFAEVRAVINVPKIGVIAGCYVSRGLIKRDAITNVMRDGLQIHSGKISSLKRFKDDVKEVAEQYECGIMIDNYANIKEGDIIEAFEVKKVKKSFKT.

Polar residues-rich tracts occupy residues 38–56 (NDSN…AEYS), 97–124 (GGYS…YSQN), and 140–192 (GGYS…NRDS). 2 disordered regions span residues 38–192 (NDSN…NRDS) and 236–274 (STPA…AETE). Residues 243–259 (ENSKELNRKLGEKKKQQ) show a composition bias toward basic and acidic residues. The tr-type G domain maps to 380–553 (EKPPVITIMG…DMMLLKANPS (174 aa)). The G1 stretch occupies residues 389 to 396 (GHVDHGKT). Residue 389–396 (GHVDHGKT) coordinates GTP. The segment at 414–418 (GITQH) is G2. The G3 stretch occupies residues 435–438 (DTPG). Residues 435-439 (DTPGH) and 489-492 (NKID) each bind GTP. The G4 stretch occupies residues 489–492 (NKID). The interval 525–527 (SAL) is G5.

It belongs to the TRAFAC class translation factor GTPase superfamily. Classic translation factor GTPase family. IF-2 subfamily.

It is found in the cytoplasm. In terms of biological role, one of the essential components for the initiation of protein synthesis. Protects formylmethionyl-tRNA from spontaneous hydrolysis and promotes its binding to the 30S ribosomal subunits. Also involved in the hydrolysis of GTP during the formation of the 70S ribosomal complex. The chain is Translation initiation factor IF-2 (infB) from Borreliella burgdorferi (strain ATCC 35210 / DSM 4680 / CIP 102532 / B31) (Borrelia burgdorferi).